Consider the following 251-residue polypeptide: CDP-diacylglycerol pyrophosphatase (251 aa).

The helical transmembrane segment at 4-24 (AGLLFLVMIVIAVVAAGIGYW) threads the bilayer.

It belongs to the Cdh family.

It is found in the cell inner membrane. It carries out the reaction a CDP-1,2-diacyl-sn-glycerol + H2O = a 1,2-diacyl-sn-glycero-3-phosphate + CMP + 2 H(+). Its pathway is phospholipid metabolism; CDP-diacylglycerol degradation; phosphatidate from CDP-diacylglycerol: step 1/1. This chain is CDP-diacylglycerol pyrophosphatase, found in Shigella flexneri.